We begin with the raw amino-acid sequence, 682 residues long: Potassium-transporting ATPase ATP-binding subunit (682 aa).

4 helical membrane-spanning segments follow: residues 35–55, 62–82, 219–239, and 254–274; these read VMFI…AMAG, ATFT…ANFA, IALT…TATI, and VLVA…LSAI. D307 acts as the 4-aspartylphosphate intermediate in catalysis. ATP-binding positions include D344, E348, 377–384, and K395; that span reads FTAQTRMS. Residues D518 and D522 each contribute to the Mg(2+) site. 3 helical membrane passes run 588–608, 616–636, and 656–676; these read FAII…LNVM, AILS…PLAL, and IYGL…DLLL.

Belongs to the cation transport ATPase (P-type) (TC 3.A.3) family. Type IA subfamily. In terms of assembly, the system is composed of three essential subunits: KdpA, KdpB and KdpC.

The protein localises to the cell inner membrane. It carries out the reaction K(+)(out) + ATP + H2O = K(+)(in) + ADP + phosphate + H(+). Functionally, part of the high-affinity ATP-driven potassium transport (or Kdp) system, which catalyzes the hydrolysis of ATP coupled with the electrogenic transport of potassium into the cytoplasm. This subunit is responsible for energy coupling to the transport system and for the release of the potassium ions to the cytoplasm. The protein is Potassium-transporting ATPase ATP-binding subunit of Klebsiella pneumoniae subsp. pneumoniae (strain ATCC 700721 / MGH 78578).